A 231-amino-acid polypeptide reads, in one-letter code: 5'-methylthioadenosine/S-adenosylhomocysteine nucleosidase (231 aa).

The active-site Proton acceptor is the glutamate 12. Substrate contacts are provided by residues glycine 78, valine 153, and 174-175 (ME). Aspartate 198 functions as the Proton donor in the catalytic mechanism.

This sequence belongs to the PNP/UDP phosphorylase family. MtnN subfamily.

It carries out the reaction S-adenosyl-L-homocysteine + H2O = S-(5-deoxy-D-ribos-5-yl)-L-homocysteine + adenine. The catalysed reaction is S-methyl-5'-thioadenosine + H2O = 5-(methylsulfanyl)-D-ribose + adenine. It catalyses the reaction 5'-deoxyadenosine + H2O = 5-deoxy-D-ribose + adenine. It participates in amino-acid biosynthesis; L-methionine biosynthesis via salvage pathway; S-methyl-5-thio-alpha-D-ribose 1-phosphate from S-methyl-5'-thioadenosine (hydrolase route): step 1/2. Its function is as follows. Catalyzes the irreversible cleavage of the glycosidic bond in both 5'-methylthioadenosine (MTA) and S-adenosylhomocysteine (SAH/AdoHcy) to adenine and the corresponding thioribose, 5'-methylthioribose and S-ribosylhomocysteine, respectively. Also cleaves 5'-deoxyadenosine, a toxic by-product of radical S-adenosylmethionine (SAM) enzymes, into 5-deoxyribose and adenine. In Vibrio campbellii (strain ATCC BAA-1116), this protein is 5'-methylthioadenosine/S-adenosylhomocysteine nucleosidase.